We begin with the raw amino-acid sequence, 242 residues long: Flavin prenyltransferase PAD1, mitochondrial (242 aa).

Residues 1–58 (MLLFPRRTNIAFFKTTGIFANFPLLGRTITTSPSFLTHKLSKEVTRASTSPPRPKRIV) constitute a mitochondrion transit peptide. FMN is bound by residues 63 to 65 (GAT), Ser89, 140 to 143 (SMKS), and Arg175. Residues Tyr205 and Arg221 each coordinate dimethylallyl phosphate.

The protein belongs to the UbiX/PAD1 family. In terms of assembly, oligomer.

Its subcellular location is the mitochondrion. The enzyme catalyses dimethylallyl phosphate + FMNH2 = prenylated FMNH2 + phosphate. Flavin prenyltransferase that catalyzes the synthesis of the prenylated FMN cofactor (prenyl-FMN) for the ferulic acid decarboxylase FDC1/ubiD. The prenyltransferase is metal-independent and links a dimethylallyl moiety from dimethylallyl monophosphate (DMAP) to the flavin N5 and C6 atoms of FMN. Involved in the decarboxylation of phenylacrylic acids like ferulic acid, p-coumaric acid or cinnamic acid, producing the corresponding vinyl derivatives which play the role of aroma metabolites. Also involved in the degradation of the food preservative sorbic acid (2,4-hexadienoic acid) to a volatile hydrocarbon, 1,3-pentadiene. Not essential for ubiquinone synthesis. Can rescue Q biosynthesis in E.coli strains lacking UbiX. Has mRNA binding activity. The protein is Flavin prenyltransferase PAD1, mitochondrial of Saccharomyces cerevisiae (strain ATCC 204508 / S288c) (Baker's yeast).